A 339-amino-acid chain; its full sequence is F420-dependent glucose-6-phosphate dehydrogenase (339 aa).

A coenzyme F420-(gamma-Glu)n-binding site is contributed by Asp-41. His-42 (proton donor) is an active-site residue. Coenzyme F420-(gamma-Glu)n-binding positions include Thr-78 and 109-110 (TG). Glu-111 serves as the catalytic Proton acceptor. Coenzyme F420-(gamma-Glu)n contacts are provided by residues Asn-114, 177–178 (SG), and 180–181 (AA). 4 residues coordinate substrate: Thr-195, Lys-198, Lys-259, and Arg-283.

The protein belongs to the F420-dependent glucose-6-phosphate dehydrogenase family. Homodimer.

The enzyme catalyses oxidized coenzyme F420-(gamma-L-Glu)(n) + D-glucose 6-phosphate + H(+) = 6-phospho-D-glucono-1,5-lactone + reduced coenzyme F420-(gamma-L-Glu)(n). Functionally, catalyzes the coenzyme F420-dependent oxidation of glucose 6-phosphate (G6P) to 6-phosphogluconolactone. The chain is F420-dependent glucose-6-phosphate dehydrogenase from Nakamurella multipartita (strain ATCC 700099 / DSM 44233 / CIP 104796 / JCM 9543 / NBRC 105858 / Y-104) (Microsphaera multipartita).